The following is a 509-amino-acid chain: MEEIQRYLQPDSSQQHNFLYPLIFQEYIYALAHDHGLNINRSILLENPGYNNQFSLLIVKRLITRMYQQNHFLISTNDSNKNTFLGCNKSLYSQMISEGFAFIVEIPFSLRLISSLSSFEGKKILKSHNLRSIHSTFPFLEDNFSHLNYVLDILIPYPVHLEILVQTLRYWVKDASSLHLLRFFLHEYWNLNSLITSKKPGYSFSKKNKRFFFFLYNSYVYECESTFVFLRNQSSHLRPTSFGALLERIYFYGKIERLVEVFAKDLQVTLWLFKDPFMHYVRYQGKSILASKGTFLLINKWKFYLVNFWQCHFSLCFHTGRIHINQLSNHSRDFMGYLSSVRLNPSMVRSQMLENSFIINNAIKKFDTLVPIIPLIGSLAKENFCTVLGHPISKPVWSDLSDSDIIDRFGRICRNLFHYYSGSSKKKTLYRIKYILRLSCARTLARKHKSTVRTFLKRSGSELLEEFLTSEEQVLSLTFPRASSSLWGVYRSRIWYLDIFCINDLANYQ.

The protein belongs to the intron maturase 2 family. MatK subfamily.

The protein localises to the plastid. Its subcellular location is the chloroplast. Usually encoded in the trnK tRNA gene intron. Probably assists in splicing its own and other chloroplast group II introns. The polypeptide is Maturase K (Atropa belladonna (Belladonna)).